The primary structure comprises 329 residues: Glycerol-3-phosphate dehydrogenase [NAD(P)+] (329 aa).

Positions 14, 34, and 108 each coordinate NADPH. Lysine 108, glycine 137, and serine 139 together coordinate sn-glycerol 3-phosphate. Residue alanine 141 coordinates NADPH. Residues lysine 192, aspartate 245, serine 255, arginine 256, and asparagine 257 each contribute to the sn-glycerol 3-phosphate site. Residue lysine 192 is the Proton acceptor of the active site. Arginine 256 contributes to the NADPH binding site. Residues isoleucine 280 and glutamate 282 each coordinate NADPH.

This sequence belongs to the NAD-dependent glycerol-3-phosphate dehydrogenase family.

The protein localises to the cytoplasm. It catalyses the reaction sn-glycerol 3-phosphate + NAD(+) = dihydroxyacetone phosphate + NADH + H(+). The enzyme catalyses sn-glycerol 3-phosphate + NADP(+) = dihydroxyacetone phosphate + NADPH + H(+). It participates in membrane lipid metabolism; glycerophospholipid metabolism. Its function is as follows. Catalyzes the reduction of the glycolytic intermediate dihydroxyacetone phosphate (DHAP) to sn-glycerol 3-phosphate (G3P), the key precursor for phospholipid synthesis. This Wigglesworthia glossinidia brevipalpis protein is Glycerol-3-phosphate dehydrogenase [NAD(P)+].